A 235-amino-acid polypeptide reads, in one-letter code: Myc target protein 1 (235 aa).

The Bipartite nuclear localization signal signature appears at 95-113 (RRRRASAPISQWSSSRRSR). A phosphoserine mark is found at S135, S138, S141, and S149.

Belongs to the MYCT1 family. In terms of tissue distribution, down-regulated in gastric cancer tissues.

The protein resides in the nucleus. In terms of biological role, may regulate certain MYC target genes, MYC seems to be a direct upstream transcriptional activator. Does not seem to significantly affect growth cell capacity. Overexpression seems to mediate many of the known phenotypic features associated with MYC, including promotion of apoptosis, alteration of morphology, enhancement of anchorage-independent growth, tumorigenic conversion, promotion of genomic instability, and inhibition of hematopoietic differentiation. The polypeptide is Myc target protein 1 (MYCT1) (Homo sapiens (Human)).